Consider the following 116-residue polypeptide: Toxin ICK-10 (116 aa).

Positions 1-19 (MMKLYSLVIIATLAAAAFA) are cleaved as a signal peptide. 4 disulfides stabilise this stretch: cysteine 56–cysteine 71, cysteine 64–cysteine 77, cysteine 68–cysteine 113, and cysteine 70–cysteine 84.

This sequence belongs to the neurotoxin 25 family. ICK-8 subfamily. Expressed by the venom gland.

It localises to the secreted. Its function is as follows. Ion channel inhibitor. This is Toxin ICK-10 from Trittame loki (Brush-footed trapdoor spider).